The primary structure comprises 2339 residues: DNA-directed RNA polymerase III subunit RPC1 (2339 aa).

The Zn(2+) site is built by cysteine 88, cysteine 91, cysteine 98, histidine 101, cysteine 128, cysteine 131, and cysteine 175. Aspartate 611, aspartate 613, and aspartate 615 together coordinate Mg(2+). Positions proline 955–glutamate 967 are bridging helix. 2 disordered regions span residues glutamate 1503–tyrosine 1557 and leucine 2038–arginine 2079. Over residues proline 1509–asparagine 1520 the composition is skewed to basic and acidic residues. Low complexity predominate over residues tyrosine 1521–tyrosine 1557. Residues leucine 2038 to asparagine 2047 are compositionally biased toward basic and acidic residues. Low complexity predominate over residues aspartate 2049 to asparagine 2059.

The protein belongs to the RNA polymerase beta' chain family. As to quaternary structure, component of the RNA polymerase III (Pol III) complex consisting of 17 subunits.

Its subcellular location is the nucleus. The enzyme catalyses RNA(n) + a ribonucleoside 5'-triphosphate = RNA(n+1) + diphosphate. Its function is as follows. DNA-dependent RNA polymerase catalyzes the transcription of DNA into RNA using the four ribonucleoside triphosphates as substrates. Largest and catalytic core component of RNA polymerase III which synthesizes small RNAs, such as 5S rRNA and tRNAs. Forms the polymerase active center together with the second largest subunit. A single-stranded DNA template strand of the promoter is positioned within the central active site cleft of Pol III. A bridging helix emanates from RPC1 and crosses the cleft near the catalytic site and is thought to promote translocation of Pol III by acting as a ratchet that moves the RNA-DNA hybrid through the active site by switching from straight to bent conformations at each step of nucleotide addition. This Plasmodium falciparum protein is DNA-directed RNA polymerase III subunit RPC1.